The primary structure comprises 248 residues: uncharacterized protein (248 aa).

Positions 33-57 form a coiled coil; it reads EWQLSEGQKRCEEINRQNRQLRVEK.

This is an uncharacterized protein from Escherichia coli (strain K12).